An 815-amino-acid polypeptide reads, in one-letter code: uncharacterized protein (815 aa).

4 disordered regions span residues 123–183 (QSNT…QPST), 249–274 (NVNN…NNTN), 592–668 (IKQN…NLNS), and 765–815 (NNEE…EEIK). Polar residues-rich tracts occupy residues 135–154 (SIIT…TSTT) and 174–183 (DSITVLQPST). Over residues 595–611 (NGSSSSNNNSKLSSTNS) the composition is skewed to low complexity. The segment covering 612–639 (GQTSDNPINSSNGGQSIKKQGSNLSLNR) has biased composition (polar residues). Low complexity predominate over residues 640 to 668 (QQSSTKLNNQSNNNNNNNANTTNQNNLNS). A compositionally biased stretch (basic and acidic residues) spans 765–782 (NNEEHNNNNKENNNENNK). Over residues 783–809 (ENINNNNNIINNNNDNNCNENNNNCNE) the composition is skewed to low complexity.

This is an uncharacterized protein from Dictyostelium discoideum (Social amoeba).